The sequence spans 315 residues: Replication factor C small subunit (315 aa).

43–50 contributes to the ATP binding site; it reads GSPGVGKT.

This sequence belongs to the activator 1 small subunits family. RfcS subfamily. In terms of assembly, heteromultimer composed of small subunits (RfcS) and large subunits (RfcL).

Part of the RFC clamp loader complex which loads the PCNA sliding clamp onto DNA. In Methanococcus vannielii (strain ATCC 35089 / DSM 1224 / JCM 13029 / OCM 148 / SB), this protein is Replication factor C small subunit.